The sequence spans 299 residues: Ribosomal RNA small subunit methyltransferase H (299 aa).

Residues 36-38, D55, D103, and Q110 contribute to the S-adenosyl-L-methionine site; that span reads GGH. Basic and acidic residues-rich tracts occupy residues 268–282 and 289–299; these read KPVR…ENPR and RAAERIEKGGD. Positions 268–299 are disordered; it reads KPVRPSEEEIRENPRARSGRLRAAERIEKGGD.

The protein belongs to the methyltransferase superfamily. RsmH family.

The protein localises to the cytoplasm. The enzyme catalyses cytidine(1402) in 16S rRNA + S-adenosyl-L-methionine = N(4)-methylcytidine(1402) in 16S rRNA + S-adenosyl-L-homocysteine + H(+). Functionally, specifically methylates the N4 position of cytidine in position 1402 (C1402) of 16S rRNA. This chain is Ribosomal RNA small subunit methyltransferase H, found in Thermotoga sp. (strain RQ2).